The following is a 443-amino-acid chain: Glucose-6-phosphate isomerase (443 aa).

Glu-285 functions as the Proton donor in the catalytic mechanism. Catalysis depends on residues His-306 and Lys-420.

The protein belongs to the GPI family.

The protein resides in the cytoplasm. It carries out the reaction alpha-D-glucose 6-phosphate = beta-D-fructose 6-phosphate. It participates in carbohydrate biosynthesis; gluconeogenesis. Its pathway is carbohydrate degradation; glycolysis; D-glyceraldehyde 3-phosphate and glycerone phosphate from D-glucose: step 2/4. Its function is as follows. Catalyzes the reversible isomerization of glucose-6-phosphate to fructose-6-phosphate. In Staphylococcus haemolyticus (strain JCSC1435), this protein is Glucose-6-phosphate isomerase.